A 556-amino-acid chain; its full sequence is WD repeat-containing protein srw1 (556 aa).

Residues 1-80 (MDEFDGFTRP…NEGDRFIPSR (80 aa)) are disordered. Residues 12-37 (SSNSSANRNSNNSMNRVENNNSNSDS) are compositionally biased toward low complexity. Residues 43-55 (SRGDAHTRMRQGF) are compositionally biased toward basic and acidic residues. Ser-62 is subject to Phosphoserine. The segment covering 69-78 (RTNEGDRFIP) has biased composition (basic and acidic residues). A Phosphothreonine modification is found at Thr-98. Residues 126-146 (TFNNSPIATPNTTIGVSTPRT) show a composition bias toward polar residues. The interval 126–173 (TFNNSPIATPNTTIGVSTPRTDSGIDDIELTQRTPPSSSHTSSSILQN) is disordered. Residues 159–169 (TPPSSSHTSSS) show a composition bias toward low complexity. A Phosphothreonine modification is found at Thr-177. Phosphoserine is present on residues Ser-187 and Ser-214. WD repeat units follow at residues 246–285 (GLAGDFYLNLLDWGQCNMLAVALASRVYLWSGISSEVTVM), 289–328 (YPTDTVTSLRWVQRGTHLAVGTHNGSVEIWDAATCKKTRT), 331–368 (GHTERVGALSWNDHVLSSGGRDNHILHRDVRAPEHYFR), 372–411 (AHRQEVCGLEWNSNENLLASGGNDNALMVWDKFEEKPLYS), 414–456 (NHIA…MLHN), 458–499 (DTGS…RVGT), and 502–541 (GHTDRVLYLAMSPNGENIVTGAADETLRFWKLFDSKSKHS).

It belongs to the WD repeat CDC20/Fizzy family. In terms of processing, phosphorylated by cdc2-cdc13-CDK complex. This targets srw1 for proteolysis which in turn promotes cdc13 turnover. Dephosphorylated during G1 arrest.

The protein resides in the nucleus. Functionally, has a role in cell differentiation and cell cycling by negatively regulating cig2 and cdc12-associated cdc2. Down-regulates the level of cdc13, particularly in a nitrogen deprived environment. Regulator of cell cycle G1 phase progression. Prevents onset of mitosis during the pre-Start G1 period. Required for degradation of cdc13 mitotic cyclin B during G1 arrest but not during mitotic exit. This Schizosaccharomyces pombe (strain 972 / ATCC 24843) (Fission yeast) protein is WD repeat-containing protein srw1 (srw1).